The following is a 268-amino-acid chain: Glutamate 5-kinase (268 aa).

Lys-15 lines the ATP pocket. Positions 55, 142, and 158 each coordinate substrate. 178–179 serves as a coordination point for ATP; that stretch reads SD.

It belongs to the glutamate 5-kinase family.

It is found in the cytoplasm. The catalysed reaction is L-glutamate + ATP = L-glutamyl 5-phosphate + ADP. The protein operates within amino-acid biosynthesis; L-proline biosynthesis; L-glutamate 5-semialdehyde from L-glutamate: step 1/2. Catalyzes the transfer of a phosphate group to glutamate to form L-glutamate 5-phosphate. This Oenococcus oeni (strain ATCC BAA-331 / PSU-1) protein is Glutamate 5-kinase.